We begin with the raw amino-acid sequence, 227 residues long: Isoprenyl transferase (227 aa).

Aspartate 13 is a catalytic residue. Residue aspartate 13 participates in Mg(2+) binding. Substrate-binding positions include 14 to 17, tryptophan 18, arginine 26, histidine 30, and 58 to 60; these read GNGR and STE. Asparagine 61 serves as the catalytic Proton acceptor. Residues tryptophan 62, arginine 64, arginine 175, and 181–183 contribute to the substrate site; that span reads RLS. Glutamate 194 contributes to the Mg(2+) binding site.

It belongs to the UPP synthase family. As to quaternary structure, homodimer. Mg(2+) serves as cofactor.

Its function is as follows. Catalyzes the condensation of isopentenyl diphosphate (IPP) with allylic pyrophosphates generating different type of terpenoids. The sequence is that of Isoprenyl transferase from Treponema denticola (strain ATCC 35405 / DSM 14222 / CIP 103919 / JCM 8153 / KCTC 15104).